The following is a 148-amino-acid chain: UPF0179 protein Ta1159 (148 aa).

Belongs to the UPF0179 family.

The sequence is that of UPF0179 protein Ta1159 from Thermoplasma acidophilum (strain ATCC 25905 / DSM 1728 / JCM 9062 / NBRC 15155 / AMRC-C165).